The primary structure comprises 424 residues: Cuticlin-1 (424 aa).

An N-terminal signal peptide occupies residues 1–18 (MTWKPIICLAALVLSASA). Residues 19 to 392 (IPVDNNVEGE…ATSTGICLTP (374 aa)) lie on the Extracellular side of the membrane. In terms of domain architecture, ZP spans 32-277 (ECGPNSITVN…PTCSEPQGFG (246 aa)). An intrachain disulfide couples Cys-197 to Cys-252. 4 consecutive repeat copies span residues 302–305 (AAPV), 307–311 (AAAPV), 312–315 (AAPV), and 320–323 (AAPA). The tract at residues 302–323 (AAPVAAAAPVAAPVAAAAAAPA) is 4 X 4 AA repeats of A-A-P-[AVI]. Residues 393–413 (IGFASFLGIGTIVATALSATI) form a helical membrane-spanning segment. Over 414–424 (FYVARPTSHKH) the chain is Cytoplasmic.

The protein localises to the cell membrane. It is found in the secreted. Functionally, component of the cuticles, which contributes to the formation of extracellular envelopes protecting the organism from the environment. Plays a role in alae formation in dauer larvae. This chain is Cuticlin-1, found in Caenorhabditis elegans.